A 119-amino-acid polypeptide reads, in one-letter code: DNA-binding protein inhibitor ID-3 (119 aa).

The bHLH domain occupies 28-80 (RGKSPSAEEPLSLLDDMNHCYSRLRELVPGVPRGTQLSQVEILQRVIDYILDL).

Homodimer, and heterodimer with other HLH proteins. Interacts with COPS5 and COPS7A. Interacts with IFI204. Interacts with GATA4 and NKX2-5. Interacts with ANKRD2; both proteins cooperate in myoblast differentiation. Interacts with CLOCK and BMAL1. In terms of processing, phosphorylated in vitro by CDC2 and PKC.

Its subcellular location is the nucleus. In terms of biological role, transcriptional regulator (lacking a basic DNA binding domain) which negatively regulates the basic helix-loop-helix (bHLH) transcription factors by forming heterodimers and inhibiting their DNA binding and transcriptional activity. Implicated in regulating a variety of cellular processes, including cellular growth, senescence, differentiation, apoptosis, angiogenesis, and neoplastic transformation. Involved in myogenesis by inhibiting skeletal muscle and cardiac myocyte differentiation and promoting muscle precursor cells proliferation. Inhibits the binding of E2A-containing protein complexes to muscle creatine kinase E-box enhancer. Regulates the circadian clock by repressing the transcriptional activator activity of the CLOCK-BMAL1 heterodimer. This Rattus norvegicus (Rat) protein is DNA-binding protein inhibitor ID-3 (Id3).